Reading from the N-terminus, the 73-residue chain is Translation initiation factor IF-1 (73 aa).

The region spanning 1–73 is the S1-like domain; it reads MPKKDGAIEI…TRGRIVYRYK (73 aa).

It belongs to the IF-1 family. As to quaternary structure, component of the 30S ribosomal translation pre-initiation complex which assembles on the 30S ribosome in the order IF-2 and IF-3, IF-1 and N-formylmethionyl-tRNA(fMet); mRNA recruitment can occur at any time during PIC assembly.

It is found in the cytoplasm. In terms of biological role, one of the essential components for the initiation of protein synthesis. Stabilizes the binding of IF-2 and IF-3 on the 30S subunit to which N-formylmethionyl-tRNA(fMet) subsequently binds. Helps modulate mRNA selection, yielding the 30S pre-initiation complex (PIC). Upon addition of the 50S ribosomal subunit IF-1, IF-2 and IF-3 are released leaving the mature 70S translation initiation complex. The sequence is that of Translation initiation factor IF-1 from Salinispora arenicola (strain CNS-205).